The sequence spans 118 residues: Small ribosomal subunit protein bTHXc (118 aa).

The N-terminal 55 residues, M1–C55, are a transit peptide targeting the chloroplast. The interval K61–N118 is disordered. The span at P96–I111 shows a compositional bias: basic and acidic residues. Phosphoserine is present on S117.

Belongs to the bacterial ribosomal protein bTHX family. As to quaternary structure, part of the 30S ribosomal subunit.

The protein resides in the plastid. The protein localises to the chloroplast. This chain is Small ribosomal subunit protein bTHXc (RPS31), found in Arabidopsis thaliana (Mouse-ear cress).